Here is a 119-residue protein sequence, read N- to C-terminus: Ribonuclease P protein component (119 aa).

Belongs to the RnpA family. As to quaternary structure, consists of a catalytic RNA component (M1 or rnpB) and a protein subunit.

The catalysed reaction is Endonucleolytic cleavage of RNA, removing 5'-extranucleotides from tRNA precursor.. Its function is as follows. RNaseP catalyzes the removal of the 5'-leader sequence from pre-tRNA to produce the mature 5'-terminus. It can also cleave other RNA substrates such as 4.5S RNA. The protein component plays an auxiliary but essential role in vivo by binding to the 5'-leader sequence and broadening the substrate specificity of the ribozyme. The sequence is that of Ribonuclease P protein component from Nitrosococcus oceani (strain ATCC 19707 / BCRC 17464 / JCM 30415 / NCIMB 11848 / C-107).